We begin with the raw amino-acid sequence, 334 residues long: Geranylgeranyl pyrophosphate synthase ltmG (334 aa).

Residues Lys53, Arg56, and His85 each coordinate isopentenyl diphosphate. 2 residues coordinate Mg(2+): Asp92 and Asp96. Residue Arg101 participates in dimethylallyl diphosphate binding. Arg102 lines the isopentenyl diphosphate pocket. 3 residues coordinate dimethylallyl diphosphate: Lys179, Thr180, and Gln213. Asp216 contacts Mg(2+). Asn220, Lys230, and Lys240 together coordinate dimethylallyl diphosphate.

This sequence belongs to the FPP/GGPP synthase family. It depends on Mg(2+) as a cofactor.

It catalyses the reaction isopentenyl diphosphate + dimethylallyl diphosphate = (2E)-geranyl diphosphate + diphosphate. It carries out the reaction isopentenyl diphosphate + (2E)-geranyl diphosphate = (2E,6E)-farnesyl diphosphate + diphosphate. The enzyme catalyses isopentenyl diphosphate + (2E,6E)-farnesyl diphosphate = (2E,6E,10E)-geranylgeranyl diphosphate + diphosphate. The protein operates within secondary metabolite biosynthesis. Functionally, geranylgeranyl pyrophosphate synthase; part of the gene cluster that mediates the biosynthesis of lolitrems, indole-diterpene mycotoxins that are potent tremorgens in mammals, and are synthesized by clavicipitaceous fungal endophytes in association with their grass hosts. The geranylgeranyl diphosphate (GGPP) synthase ltmG is proposed to catalyze the first step in lolitrem biosynthesis. LtmG catalyzes a series of iterative condensations of isopentenyl diphosphate (IPP) with dimethylallyl diphosphate (DMAPP), geranyl diphosphate (GPP), and farnesyl diphosphate (FPP), to form GGPP. GGPP then condenses with indole-3-glycerol phosphate to form 3-geranylgeranylindole, an acyclic intermediate, to be incorporated into paxilline. Either ltmG or ltmC could be responsible for this step, as both are putative prenyl transferases. The FAD-dependent monooxygenase ltmM then catalyzes the epoxidation of the two terminal alkenes of the geranylgeranyl moiety, which is subsequently cyclized by ltmB, to paspaline. The cytochrome P450 monooxygenases ltmQ and ltmP can sequentially oxidize paspaline to terpendole E and terpendole F. Alternatively, ltmP converts paspaline to an intermediate which is oxidized by ltmQ to terpendole F. LtmF, ltmK, ltmE and ltmJ appear to be unique to the epichloe endophytes. The prenyltransferase ltmF is involved in the 27-hydroxyl-O-prenylation. The cytochrome P450 monooxygenase ltmK is required for the oxidative acetal ring formation. The multi-functional prenyltransferase ltmE is required for C20- and C21-prenylations of the indole ring of paspalanes and acts together with the cytochrome P450 monooxygenase ltmJ to yield lolitremanes by multiple oxidations and ring closures. The stereoisomer pairs of lolitriol and lolitrem N or lolitrem B and lolitrem F may be attributed to variations in the way in which ring closure can occur under the action of ltmJ. While the major product of this pathway is lolitrem B, the prenyl transferases and cytochrome P450 monooxygenases identified in this pathway have a remarkable versatility in their regio- and stereo-specificities to generate a diverse range of metabolites that are products of a metabolic grid rather than a linear pathway. The protein is Geranylgeranyl pyrophosphate synthase ltmG of Epichloe festucae (strain Fl1).